The following is a 209-amino-acid chain: Ribosomal RNA large subunit methyltransferase E (209 aa).

5 residues coordinate S-adenosyl-L-methionine: Gly63, Trp65, Asp83, Asp99, and Asp124. Residue Lys164 is the Proton acceptor of the active site.

The protein belongs to the class I-like SAM-binding methyltransferase superfamily. RNA methyltransferase RlmE family.

The protein localises to the cytoplasm. It catalyses the reaction uridine(2552) in 23S rRNA + S-adenosyl-L-methionine = 2'-O-methyluridine(2552) in 23S rRNA + S-adenosyl-L-homocysteine + H(+). Its function is as follows. Specifically methylates the uridine in position 2552 of 23S rRNA at the 2'-O position of the ribose in the fully assembled 50S ribosomal subunit. The sequence is that of Ribosomal RNA large subunit methyltransferase E from Shewanella denitrificans (strain OS217 / ATCC BAA-1090 / DSM 15013).